Here is a 639-residue protein sequence, read N- to C-terminus: ADP-ribosylation factor-binding protein GGA1 (639 aa).

M1 carries the post-translational modification N-acetylmethionine. The region spanning 17–147 is the VHS domain; that stretch reads ATNPLNKELD…MLKKQGIVKS (131 aa). The interval 114–274 is interaction with ARF3; the sequence is KILELLYSWT…RLASDTEDND (161 aa). The 129-residue stretch at 171 to 299 folds into the GAT domain; that stretch reads DEEKSKMLAR…VINLYKQLVR (129 aa). S185 carries the post-translational modification Phosphoserine. Residues 300–509 are unstructured hinge; sequence GEEVNGDATA…ITVPLESIKP (210 aa). 2 disordered regions span residues 320-421 and 434-492; these read LDLS…SGLD and SLPP…QPVP. A Phosphoserine; by CK2 modification is found at S355. The Autoinhibitory signature appears at 358 to 362; the sequence is DDELM. The span at 381–390 shows a compositional bias: polar residues; it reads GWNSFQSSDA. S418 carries the phosphoserine modification. Low complexity predominate over residues 462–480; it reads SSSCSSPSSSATSLLHTVS. Pro residues predominate over residues 481 to 490; sequence PEPPRPPQQP. The GAE domain maps to 510–631; sequence SNILPVTVYD…NEMGDVDQFP (122 aa).

This sequence belongs to the GGA protein family. Monomer. Interacts with GGA2 and GGA3. Binds to clathrin and activated ARFs, including ARF1, ARF5 and ARF6. Interacts with RABEP1. Interacts with RABGEF1. Interacts with the type-I membrane proteins LRP3, M6PR/CD-MPR and IGF2R/CI-MPR. Interacts (via N-terminal VHS domain) with SORL1/sorLA and SORT1 (via C-terminal cytosolic domain). Interacts with EPN4. Interacts with CCDC91. Interacts with HEATR5B/p200a. Interacts with SYNRG/gamma-synergin. Interacts (via GAE doamin) with NECAP1 and NECAP2. Interacts (via GAE domain) with AFTPH/aftiphilin. Interacts with TSG101 and UBC. Interacts with RNF11. Interacts (via VHS domain) with BACE1 (via DXXLL motif); the interaction highly increases when BACE1 is phosphorylated at 'Ser-498'. Interacts with CNST. Interacts with ADRA2B. Interacts with ARL3; the interaction recruits, in collaboration with RABEP1, PKD1:PKD2 complex to trans-Golgi network and is required for ciliary targeting. Post-translationally, phosphorylated by CK2 and dephosphorylated by PP2A. Phosphorylation of GGA1 allows the internal DXXLL motif to bind the VHS domain and to inhibit the recognition of cargo signals. Ubiquitinated. In terms of tissue distribution, ubiquitously expressed.

The protein localises to the golgi apparatus. It localises to the trans-Golgi network membrane. The protein resides in the endosome membrane. Its subcellular location is the early endosome membrane. Functionally, plays a role in protein sorting and trafficking between the trans-Golgi network (TGN) and endosomes. Mediates the ARF-dependent recruitment of clathrin to the TGN and binds ubiquitinated proteins and membrane cargo molecules with a cytosolic acidic cluster-dileucine (DXXLL) motif. Mediates export of the GPCR receptor ADRA2B to the cell surface. Required for targeting PKD1:PKD2 complex from the trans-Golgi network to the cilium membrane. Regulates retrograde transport of proteins such as phosphorylated form of BACE1 from endosomes to the trans-Golgi network. This is ADP-ribosylation factor-binding protein GGA1 (GGA1) from Homo sapiens (Human).